We begin with the raw amino-acid sequence, 316 residues long: Iron-sulfur cluster assembly SufBD family protein MJ0034 (316 aa).

This sequence belongs to the iron-sulfur cluster assembly SufBD family.

The sequence is that of Iron-sulfur cluster assembly SufBD family protein MJ0034 from Methanocaldococcus jannaschii (strain ATCC 43067 / DSM 2661 / JAL-1 / JCM 10045 / NBRC 100440) (Methanococcus jannaschii).